An 82-amino-acid chain; its full sequence is Host translation inhibitor 5b (82 aa).

Its function is as follows. Involved in host translation shutoff without degradating host RNA. By suppressing host gene expression, facilitates the evasion from host type I interferon immune response. The sequence is that of Host translation inhibitor 5b from Avian infectious bronchitis virus (strain KB8523) (IBV).